The chain runs to 731 residues: DNA ligase (731 aa).

Residues 47–51 (DAEYD), 96–97 (SI), and E133 contribute to the NAD(+) site. The active-site N6-AMP-lysine intermediate is the K135. R156, E192, K313, and K337 together coordinate NAD(+). Positions 462, 465, 480, and 486 each coordinate Zn(2+). The BRCT domain maps to 645-731 (AATLPLAGMT…RGTPPNAGGA (87 aa)).

The protein belongs to the NAD-dependent DNA ligase family. LigA subfamily. The cofactor is Mg(2+). Requires Mn(2+) as cofactor.

The catalysed reaction is NAD(+) + (deoxyribonucleotide)n-3'-hydroxyl + 5'-phospho-(deoxyribonucleotide)m = (deoxyribonucleotide)n+m + AMP + beta-nicotinamide D-nucleotide.. Functionally, DNA ligase that catalyzes the formation of phosphodiester linkages between 5'-phosphoryl and 3'-hydroxyl groups in double-stranded DNA using NAD as a coenzyme and as the energy source for the reaction. It is essential for DNA replication and repair of damaged DNA. The protein is DNA ligase of Acidovorax sp. (strain JS42).